Consider the following 239-residue polypeptide: 1-(5-phosphoribosyl)-5-[(5-phosphoribosylamino)methylideneamino] imidazole-4-carboxamide isomerase (239 aa).

The active-site Proton acceptor is the Asp-8. The active-site Proton donor is Asp-129.

It belongs to the HisA/HisF family.

It is found in the cytoplasm. It catalyses the reaction 1-(5-phospho-beta-D-ribosyl)-5-[(5-phospho-beta-D-ribosylamino)methylideneamino]imidazole-4-carboxamide = 5-[(5-phospho-1-deoxy-D-ribulos-1-ylimino)methylamino]-1-(5-phospho-beta-D-ribosyl)imidazole-4-carboxamide. Its pathway is amino-acid biosynthesis; L-histidine biosynthesis; L-histidine from 5-phospho-alpha-D-ribose 1-diphosphate: step 4/9. This is 1-(5-phosphoribosyl)-5-[(5-phosphoribosylamino)methylideneamino] imidazole-4-carboxamide isomerase from Legionella pneumophila (strain Lens).